Reading from the N-terminus, the 871-residue chain is Dual O-methyltransferase/FAD-dependent monooxygenase CTB3 (871 aa).

Residues 1-429 (MMQFQRDLEA…GLLTVRSAGQ (429 aa)) form an O-methyltransferase region. S-adenosyl-L-methionine is bound at residue D279. The active-site Proton acceptor is the H331. Positions 430–871 (TALSGTNTLT…NLVDCSEFVF (442 aa)) are FAD-dependent monooxygenase. Positions 485, 569, and 806 each coordinate FAD.

It in the C-terminal section; belongs to the paxM FAD-dependent monooxygenase family. This sequence in the N-terminal section; belongs to the class I-like SAM-binding methyltransferase superfamily. Cation-independent O-methyltransferase family. COMT subfamily.

The enzyme catalyses nor-toralactone + S-adenosyl-L-methionine = toralactone + S-adenosyl-L-homocysteine + H(+). It carries out the reaction toralactone + NADH + O2 + H(+) = 1-(3,4,5-trihydroxy-7-methoxynaphthalen-2-yl)propan-2-one + CO2 + NAD(+). The protein operates within mycotoxin biosynthesis. Dual O-methyltransferase/FAD-dependent monooxygenase; part of the gene cluster that mediates the biosynthesis of cercosporin, a light-activated, non-host-selective toxin. The perylenequinone chromophore of cercosporin absorbs light energy to attain an electronically-activated triplet state and produces active oxygen species such as the hydroxyl radical, superoxide, hydrogen peroxide or singlet oxygen upon reaction with oxygen molecules. These reactive oxygen species cause damage to various cellular components including lipids, proteins and nucleic acids. The first step of cercosporin biosynthesis is performed by the polyketide synthase CTB1 which catalyzes the formation of nor-toralactone. The starter unit acyltransferase (SAT) domain of CTB1 initiates polyketide extension by the selective utilization of acetyl-CoA, which is elongated to the heptaketide in the beta-ketoacyl synthase (KS) domain by successive condensations with six malonyl units introduced by the malonyl acyltransferase (MAT) domain. The product template (PT) domain catalyzes C4-C9 and C2-C11 aldol cyclizations and dehydrations to a trihydroxynaphthalene, which is thought to be delivered to the thioesterase (TE) domain for product release. The bifunctional enzyme CTB3 then methylates nor-toralactone to toralactone before conducting an unusual oxidative aromatic ring opening. The O-methyltransferase CTB2 further methylates the nascent OH-6 of the CBT3 product, blocking further oxidation at this site before the reductase CTB6 reduces the 2-oxopropyl ketone at position C7, giving naphthalene. The FAD-dependent monooxygenase CTB5 in concert with the multicopper oxidase CTB12 are responsible for homodimerization of naphthalene with CTB7 installing the dioxepine moiety, finally producing cercosporin. The fasciclin domain-containing protein CTB11 might act with CTB5 and CTB12 whereas the roles of CTB9 and CTB10 have still to be elucidated. The polypeptide is Dual O-methyltransferase/FAD-dependent monooxygenase CTB3 (Cercospora nicotianae (Barn spot disease fungus)).